The chain runs to 388 residues: Succinate--CoA ligase [ADP-forming] subunit beta (388 aa).

Positions 9–244 constitute an ATP-grasp domain; sequence KEIFRSMGVA…LEEEDPKEIE (236 aa). ATP is bound by residues K46, 53-55, E99, C102, and E107; that span reads GRG. Mg(2+) is bound by residues N199 and D213. Substrate is bound by residues N264 and 321-323; that span reads GIM.

Belongs to the succinate/malate CoA ligase beta subunit family. Heterotetramer of two alpha and two beta subunits. Mg(2+) is required as a cofactor.

It catalyses the reaction succinate + ATP + CoA = succinyl-CoA + ADP + phosphate. The catalysed reaction is GTP + succinate + CoA = succinyl-CoA + GDP + phosphate. Its pathway is carbohydrate metabolism; tricarboxylic acid cycle; succinate from succinyl-CoA (ligase route): step 1/1. Succinyl-CoA synthetase functions in the citric acid cycle (TCA), coupling the hydrolysis of succinyl-CoA to the synthesis of either ATP or GTP and thus represents the only step of substrate-level phosphorylation in the TCA. The beta subunit provides nucleotide specificity of the enzyme and binds the substrate succinate, while the binding sites for coenzyme A and phosphate are found in the alpha subunit. The polypeptide is Succinate--CoA ligase [ADP-forming] subunit beta (Staphylococcus aureus (strain bovine RF122 / ET3-1)).